A 268-amino-acid polypeptide reads, in one-letter code: 4-pyridoxolactonase (268 aa).

Residues H96, H98, D100, H101, H185, D207, and H252 each coordinate Zn(2+). D100 functions as the Proton donor/acceptor in the catalytic mechanism.

The protein belongs to the metallo-beta-lactamase superfamily. Homodimer. The cofactor is Zn(2+).

The enzyme catalyses 4-pyridoxolactone + H2O = 4-pyridoxate + H(+). The protein operates within cofactor degradation; B6 vitamer degradation; 4-pyridoxate from pyridoxal: step 2/2. Inhibited by Hg(2+). Its function is as follows. Involved in the degradation of pyridoxine or pyridoxamine (free, phosphate-unbound, forms of vitamin B6). Hydrolyzes 4-pyridoxolactone to 4-pyridoxic acid. Has lower activity toward N-hexanoyl-D,L-homoserine lactone, but is not active toward 5-pyridoxolactone and gamma-butyrolactone. This chain is 4-pyridoxolactonase, found in Mesorhizobium japonicum (strain LMG 29417 / CECT 9101 / MAFF 303099) (Mesorhizobium loti (strain MAFF 303099)).